Here is a 617-residue protein sequence, read N- to C-terminus: Protein fem-1 homolog C (617 aa).

At Met-1 the chain carries N-acetylmethionine. ANK repeat units lie at residues 2–31 (DLKT…KAEV), 40–70 (NGAT…SIEV), 82–111 (EGAP…SVNN), 115–144 (TNST…DLEV), 148–177 (HGHT…DVNR), 181–210 (KGNT…KMEK), and 213–242 (YGMT…TSKT). TPR repeat units lie at residues 245–279 (INAL…RYSD) and 338–371 (SYYI…QQSN). ANK repeat units lie at residues 481 to 523 (NNFS…DVNV) and 527 to 556 (DDNS…HFDA).

The protein belongs to the fem-1 family. As to quaternary structure, component of a Cul2-RING (CRL2) E3 ubiquitin-protein ligase complex, also named ECS (Elongin BC-CUL2/5-SOCS-box protein) complex, composed of CUL2, Elongin BC (ELOB and ELOC), RBX1 and substrate-specific adapter FEM1C. In terms of tissue distribution, widely expressed. Expressed at higher level in testis.

It functions in the pathway protein modification; protein ubiquitination. Functionally, substrate-recognition component of a Cul2-RING (CRL2) E3 ubiquitin-protein ligase complex of the DesCEND (destruction via C-end degrons) pathway, which recognizes a C-degron located at the extreme C terminus of target proteins, leading to their ubiquitination and degradation. The C-degron recognized by the DesCEND pathway is usually a motif of less than ten residues and can be present in full-length proteins, truncated proteins or proteolytically cleaved forms. The CRL2(FEM1C) complex specifically recognizes proteins with an arginine at the C-terminus: recognizes and binds proteins ending with -Lys/Arg-Xaa-Arg and -Lys/Arg-Xaa-Xaa-Arg C-degrons, such as SIL1 or OR51B2, leading to their ubiquitination and degradation. The CRL2(FEM1C) complex mediates ubiquitination and degradation of truncated MSRB1/SEPX1 selenoproteins produced by failed UGA/Sec decoding. Promotes ubiquitination and degradation of SLBP. The protein is Protein fem-1 homolog C of Mus musculus (Mouse).